Here is a 447-residue protein sequence, read N- to C-terminus: Multidrug efflux pump SdrM (447 aa).

The next 14 membrane-spanning stretches (helical) occupy residues 6 to 26 (IITV…SSII), 42 to 62 (LISL…PIVG), 70 to 90 (IIYV…MCGL), 94 to 114 (FTML…LMSL), 134 to 154 (IVGS…GGIL), 161 to 181 (WLFY…IWTF), 194 to 214 (FDTK…FALL), 217 to 237 (QLLL…MCLF), 260 to 280 (VFIT…YIPV), 286 to 306 (LGLS…AWIT), 323 to 342 (IYLL…SFGI), 346 to 363 (VLIA…GYIY), 392 to 412 (LGAS…SGIF), and 418 to 438 (NVLS…VVFF).

This sequence belongs to the major facilitator superfamily.

It localises to the cell membrane. Its function is as follows. Energy-dependent drug efflux pump that increases resistance to antimicrobial agents such as norfloxacin, acriflavine and ethidium bromide. In Staphylococcus aureus (strain N315), this protein is Multidrug efflux pump SdrM.